We begin with the raw amino-acid sequence, 342 residues long: MDLTAALRRITENQDLSPDEMTAVFRTIMTGGATPAQIGGFLIGMRLKGETVQEMAAAASVMRELAERVDVGDDFHRLVDTCGTGGDARGTLNVSTAAAFVTAAGGIPVAKHGNRSVSGRSGSADLLEACGATLELSSEAVAECIRRVNVGFLFAPLHHSAMKHAVGPRKELGVRTLFNLVGPLSNPAGARRQLLGVFGQEWVRPVAEVLQALGSDHVLVVHAEDGLDEISIAAPTRIAELRNGQIEEYTVTPEDLGLRSAPLNEVTISGTKDSLAMIRAAFSGERIAAMELIAANAGAALYVGGEAPDLRRGVERARELMTSGAAAQTLERFVATTKELAQ.

Residues Gly-83, 86 to 87, Thr-91, 93 to 96, 111 to 119, and Ser-123 each bind 5-phospho-alpha-D-ribose 1-diphosphate; these read GD, NVST, and KHGNRSVSG. Residue Gly-83 participates in anthranilate binding. Ser-95 serves as a coordination point for Mg(2+). Asn-114 serves as a coordination point for anthranilate. Arg-169 serves as a coordination point for anthranilate. Residues Asp-228 and Glu-229 each contribute to the Mg(2+) site.

It belongs to the anthranilate phosphoribosyltransferase family. Homodimer. The cofactor is Mg(2+).

The catalysed reaction is N-(5-phospho-beta-D-ribosyl)anthranilate + diphosphate = 5-phospho-alpha-D-ribose 1-diphosphate + anthranilate. Its pathway is amino-acid biosynthesis; L-tryptophan biosynthesis; L-tryptophan from chorismate: step 2/5. Functionally, catalyzes the transfer of the phosphoribosyl group of 5-phosphorylribose-1-pyrophosphate (PRPP) to anthranilate to yield N-(5'-phosphoribosyl)-anthranilate (PRA). The chain is Anthranilate phosphoribosyltransferase from Halorhodospira halophila (strain DSM 244 / SL1) (Ectothiorhodospira halophila (strain DSM 244 / SL1)).